Consider the following 423-residue polypeptide: D-threonate kinase (423 aa).

Substrate is bound by residues Asp9, Arg51, and Lys81–Ser84. ATP-binding positions include Ser245, Gly355 to Ile358, and Gly401.

It belongs to the four-carbon acid sugar kinase family.

The enzyme catalyses D-threonate + ATP = 4-O-phospho-D-threonate + ADP + H(+). Catalyzes the ATP-dependent phosphorylation of D-threonate to D-threonate 4-phosphate. Can also phosphorylate 4-hydroxy-L-threonine, with lower efficiency. This side reaction may serve to deal with the toxicity of 4-hydroxy-L-threonine by converting it into 4-hydroxy-L-threonine 4-phosphate, a useful product that can be used by PdxA2. This chain is D-threonate kinase, found in Salmonella typhimurium (strain LT2 / SGSC1412 / ATCC 700720).